A 274-amino-acid polypeptide reads, in one-letter code: Large ribosomal subunit protein uL2 (274 aa).

Disordered stretches follow at residues 28–55 (APHA…RHVG) and 224–274 (VAMN…RRRK).

The protein belongs to the universal ribosomal protein uL2 family. As to quaternary structure, part of the 50S ribosomal subunit. Forms a bridge to the 30S subunit in the 70S ribosome.

One of the primary rRNA binding proteins. Required for association of the 30S and 50S subunits to form the 70S ribosome, for tRNA binding and peptide bond formation. It has been suggested to have peptidyltransferase activity; this is somewhat controversial. Makes several contacts with the 16S rRNA in the 70S ribosome. The chain is Large ribosomal subunit protein uL2 from Pseudomonas putida (strain ATCC 47054 / DSM 6125 / CFBP 8728 / NCIMB 11950 / KT2440).